The following is a 1713-amino-acid chain: MSAKVRLKKLEQLLLDGPWRNDSALSVETLLDVLVCLYTECSHSALRRDKYVAEFLEWAKPFTQLVKDMQLHREDFEIIKVIGRGAFGEVAVVKMKNTERIYAMKILNKWEMLKRAETACFREERDVLVNGDCQWITALHYAFQDENYLYLVMDYYVGGDLLTLLSKFEDKLPEDMARFYIGEMVLAIDSIHQLHYVHRDIKPDNVLLDVNGHIRLADFGSCLKMNDDGTVQSSVAVGTPDYISPEILQAMEDGMGKYGPECDWWSLGVCMYEMLYGETPFYAESLVETYGKIMNHEERFQFPSHVTDVSEEAKDLIQRLICSRERRLGQNGIEDFKKHAFFEGLNWENIRNLEAPYIPDVSSPSDTSNFDVDDDMLRNIEILPPGSHTGFSGLHLPFIGFTFTTESCFSDRGSLKSMTQSNTLTKDEDVQRDLENSLQIEAYERRIRRLEQEKLELSRKLQESTQTVQSLHGSTRALGNSNRDKEIKRLNEELERMKSKMADSNRLERQLEDTVTLRQEHEDSTHRLKGLEKQYRLARQEKEELHKQLVEASERLKSQTKELKDAHQQRKRALQEFSELNERMSELRSLKQKVSRQLRDKEEEMEVAMQKIDSMRQDLRKSEKSRKELEARLEDAAAEASKERKLREHSESFCKQMERELEALKVKQGGRGPGAASEHQQEISKIRSELEKKVLFYEEELVRREASHVLEVKNVKKEVHDSESHQLALQKEVLMLKDKLEKSKRERHSEMEEAIGTVKDKYERERAMLFDENKKLTAENEKLCSFVDKLTAQNRQLEDELQDLASKKESVAHWEAQIAEIIQWVSDEKDARGYLQALASKMTEELETLRSSSLGSRTLDPLWKVRRSQKLDMSARLELQSALEAEIRAKQLVQEELRKVKDSSLAFESKLKESEAKNRELLEEMQSLRKRMEEKFRADTGLKLPDFQDSIFEYFNTAPLAHDLTFRTSSASDQETQASKMDLSPSVSVATSTEQQEDMARPQQRPSPVPLPSTQALAMAGPKPKAHQFSIKSFPSPTQCSHCTSLMVGLIRQGYACEVCAFSCHVSCKDSAPQVCPIPPEQSKRPLGVDVQRGIGTAYKGYVKVPKPTGVKKGWQRAYAVVCDCKLFLYDLPEGKSTQPGVVASQVLDLRDEEFAVSSVLASDVIHATRRDIPCIFRVTASLLGSPSKTSSLLILTENENEKRKWVGILEGLQAILHKNRLKSQVVHVAQEAYDSSLPLIKAVLAAAIVDGDRIAVGLEEGLYVIELTRDVIVRAADCKKVYQIELAPKEKIAILLCGRNHHVHLYPWSSFDGAEASNFDIKLPETKGCQLIATGTLRKSSSTCLFVAVKRLILCYEIQRTKPFHRKFSELVAPGHVQWMAVFKDRLCVGYPSGFSLLSIQGDGPPLDLVNPTDPSLAFLSQQSFDALCAVELKSEEYLLCFSHMGLYVDPQGRRSRMQELMWPAAPVACSCSPTHVTVYSEYGVDVFDVRTMEWVQTIGLRRIRPLNSDGSLNLLGCEPPRLIYFKNKFSGTILNVPDTSDNSKKQMLRTRSKRRFVFKVPEEERLQQRREMLRDPELRSKMISNPTNFNHVAHMGPGDGMQVLMDLPLSAAPTVQEEKQGPTPAGLPRQPPSRSKPYVSWPSSGGSEPGVPVPLRSMSDPDQDFDKEPDSDSTKHSTPSNSSNPSGPPSPNSPHRSQLPMEGLDQPSCDA.

The Protein kinase domain maps to 76–342 (FEIIKVIGRG…IEDFKKHAFF (267 aa)). ATP-binding positions include 82–90 (IGRGAFGEV) and lysine 105. Catalysis depends on aspartate 200, which acts as the Proton acceptor. Phosphoserine; by autocatalysis is present on residues serine 221 and serine 233. Threonine 239 carries the post-translational modification Phosphothreonine; by autocatalysis. An AGC-kinase C-terminal domain is found at 343-413 (EGLNWENIRN…TTESCFSDRG (71 aa)). At threonine 423 the chain carries Phosphothreonine. Positions 434–649 (LENSLQIEAY…ASKERKLREH (216 aa)) form a coiled coil. Arginine 671 is modified (omega-N-methylarginine). Coiled-coil stretches lie at residues 681–815 (QEIS…AHWE) and 878–939 (ELQS…FRAD). Phosphoserine is present on serine 927. The residue at position 954 (tyrosine 954) is a Phosphotyrosine. Over residues 971 to 994 (ASDQETQASKMDLSPSVSVATSTE) the composition is skewed to polar residues. Residues 971–1022 (ASDQETQASKMDLSPSVSVATSTEQQEDMARPQQRPSPVPLPSTQALAMAGP) are disordered. The segment at 1026-1076 (AHQFSIKSFPSPTQCSHCTSLMVGLIRQGYACEVCAFSCHVSCKDSAPQVC) adopts a Phorbol-ester/DAG-type zinc-finger fold. The region spanning 1096–1215 (GTAYKGYVKV…WVGILEGLQA (120 aa)) is the PH domain. The 275-residue stretch at 1241–1515 (IKAVLAAAIV…RPLNSDGSLN (275 aa)) folds into the CNH domain. The 14-residue stretch at 1585-1598 (ISNPTNFNHVAHMG) folds into the CRIB domain. Positions 1616–1713 (TVQEEKQGPT…EGLDQPSCDA (98 aa)) are disordered. Residues 1666-1677 (DFDKEPDSDSTK) show a composition bias toward basic and acidic residues. Serine 1682, serine 1684, serine 1688, serine 1692, and serine 1695 each carry phosphoserine.

Belongs to the protein kinase superfamily. AGC Ser/Thr protein kinase family. DMPK subfamily. In terms of assembly, homodimer and homotetramer via the coiled coil regions. Interacts tightly with GTP-bound but not GDP-bound CDC42. Interacts with TJP1; this interaction requires the presence of catalytically active CDC42. Forms a tripartite complex with MYO18A and LURAP1 with the latter acting as an adapter connecting CDC42BPB and MYO18A. LURAP1 binding results in activation of CDC42BPB by abolition of its negative autoregulation. Interacts with STRIP1, STRN3 and SIKE1. Interacts with CPNE4 (via VWFA domain). Interacts with LURAP1. Interacts (via AGC-kinase C-terminal domain) with FAM89B/LRAP25 (via LRR repeat). Forms a tripartite complex with FAM89B/LRAP25 and LIMK1. It depends on Mg(2+) as a cofactor. In terms of processing, proteolytically cleaved by caspases upon apoptosis induction.

Its subcellular location is the cytoplasm. The protein resides in the cell membrane. The protein localises to the cell junction. It is found in the cell projection. It localises to the lamellipodium. It carries out the reaction L-seryl-[protein] + ATP = O-phospho-L-seryl-[protein] + ADP + H(+). The catalysed reaction is L-threonyl-[protein] + ATP = O-phospho-L-threonyl-[protein] + ADP + H(+). Maintained in an inactive, closed conformation by an interaction between the kinase domain and the negative autoregulatory C-terminal coiled-coil region. Agonist binding to the phorbol ester binding site disrupts this, releasing the kinase domain to allow N-terminus-mediated dimerization and kinase activation by transautophosphorylation. Inhibited by chelerythrine chloride. Serine/threonine-protein kinase which is an important downstream effector of CDC42 and plays a role in the regulation of cytoskeleton reorganization and cell migration. Regulates actin cytoskeletal reorganization via phosphorylation of PPP1R12C and MYL9/MLC2. In concert with MYO18A and LURAP1, is involved in modulating lamellar actomyosin retrograde flow that is crucial to cell protrusion and migration. Phosphorylates PPP1R12A. In concert with FAM89B/LRAP25 mediates the targeting of LIMK1 to the lamellipodium resulting in its activation and subsequent phosphorylation of CFL1 which is important for lamellipodial F-actin regulation. The chain is Serine/threonine-protein kinase MRCK beta from Mus musculus (Mouse).